Consider the following 362-residue polypeptide: MEELKELRKEIDRIDEEILRLLNERAKLAKRIGEIKSKANLPIHVPEREREIFEKILRLNKEVYGGVFPQEALVHIYREIISACLSLEKKIKVAYLGPKATFTHQAALEFFGFSAHYTPCSTIRDVFVEVETKRADYGVVPVENTIEGVVNYTLDMFLESDVKIAGEIVIPITLHLLSASDSIENVEKVYSHKMALAQCRSWLEKNLPSVQVIEVESTAKACEIALEDERAGAVASEVAAYTYHLNILARNIQDSGDNFTRFLVIAKRDLKPTGSDKTSILFGVKDEPGALYKALEVFYKHGINLTKIESRPSKKKAWDYVFFVDLEGHKEEERVEKALKELKEKTQFLKVLGSYPKALLQE.

The Chorismate mutase domain occupies 1–92 (MEELKELRKE…ACLSLEKKIK (92 aa)). The substrate site is built by Arg-8, Arg-25, Lys-36, and Glu-49. The region spanning 93 to 267 (VAYLGPKATF…NFTRFLVIAK (175 aa)) is the Prephenate dehydratase domain. Residues 279–356 (SILFGVKDEP…QFLKVLGSYP (78 aa)) enclose the ACT domain.

Its subcellular location is the cytoplasm. It catalyses the reaction chorismate = prephenate. It carries out the reaction prephenate + H(+) = 3-phenylpyruvate + CO2 + H2O. It functions in the pathway amino-acid biosynthesis; L-phenylalanine biosynthesis; phenylpyruvate from prephenate: step 1/1. It participates in metabolic intermediate biosynthesis; prephenate biosynthesis; prephenate from chorismate: step 1/1. In terms of biological role, catalyzes the Claisen rearrangement of chorismate to prephenate and the decarboxylation/dehydration of prephenate to phenylpyruvate. In Aquifex aeolicus (strain VF5), this protein is Bifunctional chorismate mutase/prephenate dehydratase (pheA).